Consider the following 168-residue polypeptide: Small ribosomal subunit protein uS9 (168 aa).

Over residues 1 to 29 (MAQNEELTAEAVEAEETLTSYTSESTSAE) the composition is skewed to low complexity. The disordered stretch occupies residues 1-36 (MAQNEELTAEAVEAEETLTSYTSESTSAEDAPKKER).

Belongs to the universal ribosomal protein uS9 family.

In Paenarthrobacter aurescens (strain TC1), this protein is Small ribosomal subunit protein uS9.